The chain runs to 325 residues: tRNA-dihydrouridine(16) synthase (325 aa).

Residues 12 to 14 (PMQ) and Gln73 each bind FMN. Catalysis depends on Cys103, which acts as the Proton donor. FMN-binding positions include Lys144, 205–207 (NGE), and 229–230 (GR).

This sequence belongs to the Dus family. DusC subfamily. FMN serves as cofactor.

The catalysed reaction is 5,6-dihydrouridine(16) in tRNA + NADP(+) = uridine(16) in tRNA + NADPH + H(+). It carries out the reaction 5,6-dihydrouridine(16) in tRNA + NAD(+) = uridine(16) in tRNA + NADH + H(+). Catalyzes the synthesis of 5,6-dihydrouridine (D), a modified base found in the D-loop of most tRNAs, via the reduction of the C5-C6 double bond in target uridines. Specifically modifies U16 in tRNAs. The polypeptide is tRNA-dihydrouridine(16) synthase (Haemophilus ducreyi (strain 35000HP / ATCC 700724)).